Here is a 474-residue protein sequence, read N- to C-terminus: MTQKLHIKTWGCQMNEYDSSKMADLLLSTHGLELTEAPEEADVLLLNTCSIREKAQEKVFHQLGRWKELKKNNPNLVIGVGGCVASQEGEHIRHRAPYVDIIFGPQTLHRLPEMINQIRGGKSSVVDVSFPEIEKFDRLPEPRAEGPTAFVSIMEGCNKYCTFCVVPYTRGEEVSRPVDDVLFEIAQLAEQGVREVNLLGQNVNAYRGPTHDGQICSFAELLRLVASIDGIDRLRFTTSHPIEFTNDIIDVYRDTPELVSFLHLPVQAGSDRVLTMMKRGHTALEYKSIIRKLRAVRPDIQISSDFIVGFPGETAEDFEQTMNLIAQVNFDMSFSFVYSARPGTPAADMPDDVTEDEKKQRLYVLQERINQQAAQFSRRMLGTEQRVLVEGPSKKDIMELTGRTETNRIVNFQGSPEMIGKFVDVKITDVYTNSLRGEVVRTEDEMGLRIAQSPQEVMNRTRKEDELGVGRYHG.

Residues 3 to 120 (QKLHIKTWGC…LPEMINQIRG (118 aa)) form the MTTase N-terminal domain. Cys12, Cys49, Cys83, Cys157, Cys161, and Cys164 together coordinate [4Fe-4S] cluster. The Radical SAM core domain maps to 143-375 (RAEGPTAFVS…QERINQQAAQ (233 aa)). The TRAM domain occupies 378-441 (RRMLGTEQRV…TNSLRGEVVR (64 aa)).

It belongs to the methylthiotransferase family. MiaB subfamily. In terms of assembly, monomer. [4Fe-4S] cluster serves as cofactor.

Its subcellular location is the cytoplasm. The catalysed reaction is N(6)-dimethylallyladenosine(37) in tRNA + (sulfur carrier)-SH + AH2 + 2 S-adenosyl-L-methionine = 2-methylsulfanyl-N(6)-dimethylallyladenosine(37) in tRNA + (sulfur carrier)-H + 5'-deoxyadenosine + L-methionine + A + S-adenosyl-L-homocysteine + 2 H(+). Its function is as follows. Catalyzes the methylthiolation of N6-(dimethylallyl)adenosine (i(6)A), leading to the formation of 2-methylthio-N6-(dimethylallyl)adenosine (ms(2)i(6)A) at position 37 in tRNAs that read codons beginning with uridine. The polypeptide is tRNA-2-methylthio-N(6)-dimethylallyladenosine synthase (Haemophilus influenzae (strain PittEE)).